The following is a 130-amino-acid chain: Ribosome-binding factor A (130 aa).

Belongs to the RbfA family. As to quaternary structure, monomer. Binds 30S ribosomal subunits, but not 50S ribosomal subunits or 70S ribosomes.

The protein resides in the cytoplasm. Functionally, one of several proteins that assist in the late maturation steps of the functional core of the 30S ribosomal subunit. Associates with free 30S ribosomal subunits (but not with 30S subunits that are part of 70S ribosomes or polysomes). Required for efficient processing of 16S rRNA. May interact with the 5'-terminal helix region of 16S rRNA. The chain is Ribosome-binding factor A from Prochlorococcus marinus (strain SARG / CCMP1375 / SS120).